We begin with the raw amino-acid sequence, 521 residues long: MSFSRSEAAPAAPLPDLAATLAAPRDDAFQQLGAAFVTRLPAAPLPAPYVVGFSDDAARMLGLEPALRDAPGFAELFCGNPTRDWPQASLPYASVYSGHQFGVWAGQLGDGRALTIGELAHDGRRYELQLKGAGRTPYSRMGDGRAVLRSSIREFLCSEAMHHLGIPTTRALAVIGSDQPVVREEIETSAVVTRVAQSFVRFGHFEHFFANDRPEQLRALADHVIERFYPACRDADDPYLALLAEATRRTAELVAQWQAVGFCHGVMNTDNMSILGLTIDYGPFGFIDAFDAKHVCNHSDTQGRYAYRMQPRIAHWNCFCLAQALLPLIGLHRDAPSEDARAERAVEDAHAVLGRFPEQFGPALERAMRAKLGLALEREGDAALANQLLEIMDASHADFTLTFRHLARVSKHDARGDAPVRDLFIDRDAFDRWANLYRARLSEEARDDASRAAAMNRVNPKYVLRNHLAETAIRRAKEKDFSEVERLAAVLRRPFDEQPEHDAYAALPPDWASTLEVSCSS.

ATP-binding residues include Gly-109, Gly-111, Arg-112, Lys-131, Asp-143, Gly-144, Arg-194, and Arg-201. Asp-270 serves as the catalytic Proton acceptor. Asn-271 and Asp-280 together coordinate Mg(2+). Asp-280 contacts ATP.

The protein belongs to the SELO family. Requires Mg(2+) as cofactor. Mn(2+) is required as a cofactor.

It catalyses the reaction L-seryl-[protein] + ATP = 3-O-(5'-adenylyl)-L-seryl-[protein] + diphosphate. It carries out the reaction L-threonyl-[protein] + ATP = 3-O-(5'-adenylyl)-L-threonyl-[protein] + diphosphate. The enzyme catalyses L-tyrosyl-[protein] + ATP = O-(5'-adenylyl)-L-tyrosyl-[protein] + diphosphate. The catalysed reaction is L-histidyl-[protein] + UTP = N(tele)-(5'-uridylyl)-L-histidyl-[protein] + diphosphate. It catalyses the reaction L-seryl-[protein] + UTP = O-(5'-uridylyl)-L-seryl-[protein] + diphosphate. It carries out the reaction L-tyrosyl-[protein] + UTP = O-(5'-uridylyl)-L-tyrosyl-[protein] + diphosphate. In terms of biological role, nucleotidyltransferase involved in the post-translational modification of proteins. It can catalyze the addition of adenosine monophosphate (AMP) or uridine monophosphate (UMP) to a protein, resulting in modifications known as AMPylation and UMPylation. This is Protein nucleotidyltransferase YdiU from Burkholderia pseudomallei (strain K96243).